A 260-amino-acid polypeptide reads, in one-letter code: Phosphatidate cytidylyltransferase (260 aa).

Helical transmembrane passes span 9-29 (IIALIVFLPVLLKGGLILMLF), 46-66 (MIKFLSIPGIISALGILIIML), 70-90 (AGSWVNDLQLKSLIAMSFILL), 102-122 (FMDAAFCLMSIAYVGIGFMYL), 130-150 (LHYILFAFLVVWLTDTGAYIF), 172-192 (FVGGLICSLIVPLVMMIFVDF), and 196-216 (LWLLLIITIILSMFGQLGDLV).

Belongs to the CDS family.

The protein resides in the cell membrane. The enzyme catalyses a 1,2-diacyl-sn-glycero-3-phosphate + CTP + H(+) = a CDP-1,2-diacyl-sn-glycerol + diphosphate. It functions in the pathway phospholipid metabolism; CDP-diacylglycerol biosynthesis; CDP-diacylglycerol from sn-glycerol 3-phosphate: step 3/3. This is Phosphatidate cytidylyltransferase (cdsA) from Staphylococcus saprophyticus subsp. saprophyticus (strain ATCC 15305 / DSM 20229 / NCIMB 8711 / NCTC 7292 / S-41).